The primary structure comprises 1491 residues: Pleckstrin homology domain-containing family H member 2 (1491 aa).

Positions 19–177 form a coiled coil; that stretch reads ALEAQLMKFR…ELQEKKISCV (159 aa). 3 disordered regions span residues 232-435, 506-546, and 612-668; these read AEKP…PFQP, DDGL…LHRF, and SSSP…SDYA. The span at 253 to 264 shows a compositional bias: polar residues; that stretch reads TSCSSEQNQKTR. The segment covering 374–385 has biased composition (basic and acidic residues); sequence KEQDSSSDELNK. Residues 392–406 show a composition bias toward polar residues; the sequence is LDYTSSSSEANTPSP. Low complexity predominate over residues 657–666; it reads SDSSAASESD. 2 consecutive PH domains span residues 702–796 and 810–918; these read PLEK…SVLR and KPAV…VAAG. Residues 954–1109 enclose the MyTH4 domain; that stretch reads HSKEGILSPL…PSRMEILSTL (156 aa). Residues 1120-1449 enclose the FERM domain; that stretch reads FSIPVHFMNG…SYINSFHQQK (330 aa). The disordered stretch occupies residues 1466–1491; sequence QAPQARVMGSQPPLSNSRPTKGPTLL.

As to quaternary structure, self-associates. Interacts with TGFB1I1. As to expression, expressed in the kidney and testis. Expressed in the kidney exclusively by glomerular podocytes.

The protein localises to the cytoplasm. It localises to the cytoskeleton. It is found in the cell membrane. Its subcellular location is the cell projection. The protein resides in the lamellipodium. In terms of biological role, in the kidney glomerulus may play a role in linking podocyte foot processes to the glomerular basement membrane. May be involved in stabilization of F-actin by attenuating its depolymerization. Can recruit TGFB1I1 from focal adhesions to podocyte lamellipodia. This is Pleckstrin homology domain-containing family H member 2 (Plekhh2) from Mus musculus (Mouse).